The following is a 908-amino-acid chain: Alanine--tRNA ligase (908 aa).

Zn(2+) contacts are provided by His588, His592, Cys691, and His695.

It belongs to the class-II aminoacyl-tRNA synthetase family. Zn(2+) is required as a cofactor.

It is found in the cytoplasm. It catalyses the reaction tRNA(Ala) + L-alanine + ATP = L-alanyl-tRNA(Ala) + AMP + diphosphate. Catalyzes the attachment of alanine to tRNA(Ala) in a two-step reaction: alanine is first activated by ATP to form Ala-AMP and then transferred to the acceptor end of tRNA(Ala). Also edits incorrectly charged Ser-tRNA(Ala) and Gly-tRNA(Ala) via its editing domain. The polypeptide is Alanine--tRNA ligase (Mycobacterium leprae (strain TN)).